A 637-amino-acid polypeptide reads, in one-letter code: DNA mismatch repair protein MutL (637 aa).

Disordered stretches follow at residues 352 to 384 (DDFT…NVLF) and 405 to 430 (ASVE…AMEQ).

It belongs to the DNA mismatch repair MutL/HexB family.

In terms of biological role, this protein is involved in the repair of mismatches in DNA. It is required for dam-dependent methyl-directed DNA mismatch repair. May act as a 'molecular matchmaker', a protein that promotes the formation of a stable complex between two or more DNA-binding proteins in an ATP-dependent manner without itself being part of a final effector complex. This chain is DNA mismatch repair protein MutL, found in Halalkalibacterium halodurans (strain ATCC BAA-125 / DSM 18197 / FERM 7344 / JCM 9153 / C-125) (Bacillus halodurans).